The primary structure comprises 828 residues: Periplasmic nitrate reductase (828 aa).

A signal peptide (tat-type signal) is located at residues 1–31; that stretch reads MKLSRRSFMKANAVAAAAAAAGLSVPGVARA. A 4Fe-4S Mo/W bis-MGD-type domain is found at 39–95; the sequence is IKWDKAPCRFCGTGCGVLVGTQQGRVVACQGDPDAPVNRGLNCIKGYFLPKIMYGKD. The [4Fe-4S] cluster site is built by Cys46, Cys49, Cys53, and Cys81. Residues Lys83, Gln150, Asn175, Cys179, 212-219, 243-247, 262-264, Met372, Gln376, Asn482, 508-509, Lys531, Asp558, and 718-727 each bind Mo-bis(molybdopterin guanine dinucleotide); these read WGANMAEM, STYQH, QSD, SD, and TGRVLEHWHT. Phe794 provides a ligand contact to substrate. Mo-bis(molybdopterin guanine dinucleotide) is bound by residues Asn802 and Lys819.

Belongs to the prokaryotic molybdopterin-containing oxidoreductase family. NasA/NapA/NarB subfamily. As to quaternary structure, component of the periplasmic nitrate reductase NapAB complex composed of NapA and NapB. The cofactor is [4Fe-4S] cluster. Requires Mo-bis(molybdopterin guanine dinucleotide) as cofactor. Predicted to be exported by the Tat system. The position of the signal peptide cleavage has not been experimentally proven.

It localises to the periplasm. The enzyme catalyses 2 Fe(II)-[cytochrome] + nitrate + 2 H(+) = 2 Fe(III)-[cytochrome] + nitrite + H2O. Its function is as follows. Catalytic subunit of the periplasmic nitrate reductase complex NapAB. Receives electrons from NapB and catalyzes the reduction of nitrate to nitrite. In Shigella flexneri, this protein is Periplasmic nitrate reductase.